Here is a 527-residue protein sequence, read N- to C-terminus: ATP synthase subunit alpha (527 aa).

172–179 serves as a coordination point for ATP; sequence GDRQTGKT.

Belongs to the ATPase alpha/beta chains family. In terms of assembly, F-type ATPases have 2 components, CF(1) - the catalytic core - and CF(0) - the membrane proton channel. CF(1) has five subunits: alpha(3), beta(3), gamma(1), delta(1), epsilon(1). CF(0) has three main subunits: a(1), b(2) and c(9-12). The alpha and beta chains form an alternating ring which encloses part of the gamma chain. CF(1) is attached to CF(0) by a central stalk formed by the gamma and epsilon chains, while a peripheral stalk is formed by the delta and b chains.

It localises to the cell inner membrane. It catalyses the reaction ATP + H2O + 4 H(+)(in) = ADP + phosphate + 5 H(+)(out). Produces ATP from ADP in the presence of a proton gradient across the membrane. The alpha chain is a regulatory subunit. This Bacteroides fragilis (strain ATCC 25285 / DSM 2151 / CCUG 4856 / JCM 11019 / LMG 10263 / NCTC 9343 / Onslow / VPI 2553 / EN-2) protein is ATP synthase subunit alpha.